The primary structure comprises 125 residues: Nascent polypeptide-associated complex protein (125 aa).

The NAC-A/B domain occupies 9 to 76 (PRMMKQMQKM…SKNTSKTAEK (68 aa)).

It belongs to the NAC-alpha family. As to quaternary structure, homodimer. Interacts with the ribosome. Binds ribosomal RNA.

In terms of biological role, contacts the emerging nascent chain on the ribosome. In Methanococcus vannielii (strain ATCC 35089 / DSM 1224 / JCM 13029 / OCM 148 / SB), this protein is Nascent polypeptide-associated complex protein.